Consider the following 652-residue polypeptide: Type III restriction-modification enzyme StyLTI Mod subunit (652 aa).

Residues 135–138 (DPPY) are binding of S-adenosyl methionine.

Belongs to the N(4)/N(6)-methyltransferase family. As to quaternary structure, homodimer, also forms a functional restriction-competent complex with Res.

It carries out the reaction a 2'-deoxyadenosine in DNA + S-adenosyl-L-methionine = an N(6)-methyl-2'-deoxyadenosine in DNA + S-adenosyl-L-homocysteine + H(+). A beta subtype methylase that binds the system-specific DNA recognition site 5'-CAGAG-3' and methylates A-4 (of only 1 strand as the other does not have an A residue). DNA restriction requires both the Res and Mod subunits. This chain is Type III restriction-modification enzyme StyLTI Mod subunit, found in Salmonella typhimurium (strain LT2 / SGSC1412 / ATCC 700720).